Consider the following 418-residue polypeptide: Cell division protein FtsA (418 aa).

This sequence belongs to the FtsA/MreB family. As to quaternary structure, self-interacts. Interacts with FtsZ.

The protein localises to the cell inner membrane. Cell division protein that is involved in the assembly of the Z ring. May serve as a membrane anchor for the Z ring. The chain is Cell division protein FtsA from Buchnera aphidicola subsp. Acyrthosiphon pisum (strain APS) (Acyrthosiphon pisum symbiotic bacterium).